The sequence spans 254 residues: Undecaprenyl-diphosphatase (254 aa).

A run of 8 helical transmembrane segments spans residues 1–21 (MGII…FLPV), 41–61 (AHKA…VFLY), 75–95 (LIIA…IIKG), 96–116 (LFSP…FIAV), 130–150 (ILKI…IAMI), 174–194 (AEFS…YDIM), 210–230 (TGFV…IGFV), and 234–254 (NFVP…LFVL).

It belongs to the UppP family.

The protein localises to the cell inner membrane. The catalysed reaction is di-trans,octa-cis-undecaprenyl diphosphate + H2O = di-trans,octa-cis-undecaprenyl phosphate + phosphate + H(+). Functionally, catalyzes the dephosphorylation of undecaprenyl diphosphate (UPP). Confers resistance to bacitracin. This Persephonella marina (strain DSM 14350 / EX-H1) protein is Undecaprenyl-diphosphatase.